Here is a 458-residue protein sequence, read N- to C-terminus: tRNA modification GTPase MnmE (458 aa).

The (6S)-5-formyl-5,6,7,8-tetrahydrofolate site is built by arginine 26, glutamate 88, and arginine 127. Positions 224-378 (GLSTAIIGRP…IEDRINQLFF (155 aa)) constitute a TrmE-type G domain. K(+) is bound at residue asparagine 234. GTP contacts are provided by residues 234 to 239 (NVGKSS), 253 to 259 (TDIAGTT), and 278 to 281 (DTAG). Serine 238 contacts Mg(2+). Residues threonine 253, isoleucine 255, and threonine 258 each coordinate K(+). Threonine 259 is a Mg(2+) binding site. Lysine 458 contacts (6S)-5-formyl-5,6,7,8-tetrahydrofolate.

The protein belongs to the TRAFAC class TrmE-Era-EngA-EngB-Septin-like GTPase superfamily. TrmE GTPase family. In terms of assembly, homodimer. Heterotetramer of two MnmE and two MnmG subunits. K(+) serves as cofactor.

The protein localises to the cytoplasm. Functionally, exhibits a very high intrinsic GTPase hydrolysis rate. Involved in the addition of a carboxymethylaminomethyl (cmnm) group at the wobble position (U34) of certain tRNAs, forming tRNA-cmnm(5)s(2)U34. The chain is tRNA modification GTPase MnmE from Streptococcus pyogenes serotype M5 (strain Manfredo).